Consider the following 307-residue polypeptide: Acetaldehyde dehydrogenase (307 aa).

12-15 provides a ligand contact to NAD(+); sequence SGNI. Catalysis depends on Cys127, which acts as the Acyl-thioester intermediate. NAD(+)-binding positions include 158-166 and Asn278; that span reads SAGPGTRQN.

The protein belongs to the acetaldehyde dehydrogenase family. In terms of assembly, monomer. Can also form a heterotetramer composed of two aldolase (TTHB246) and two dehydrogenase (TTHB247) subunits. Upon complex formation, the aldolase shows a 5-fold increase in substrate affinity, while the dehydrogenase shows a 3-fold decrease; the kcat values of each enzyme are reduced by 2-fold when they are in a complex.

The enzyme catalyses acetaldehyde + NAD(+) + CoA = acetyl-CoA + NADH + H(+). The catalysed reaction is propanal + NAD(+) + CoA = propanoyl-CoA + NADH + H(+). Catalyzes the conversion of acetaldehyde or propanal to acetyl-CoA or propanoyl-CoA, respectively, using NAD(+) and coenzyme A. The aldehyde substrates can be directly channeled from the aldolase TTHB246 to the dehydrogenase TTHB247. Is the final enzyme in the meta-cleavage pathway for the degradation of aromatic compounds. This chain is Acetaldehyde dehydrogenase, found in Thermus thermophilus (strain ATCC 27634 / DSM 579 / HB8).